Here is a 734-residue protein sequence, read N- to C-terminus: Photosystem I P700 chlorophyll a apoprotein A2 (734 aa).

A run of 8 helical transmembrane segments spans residues 46–69 (IFAS…FHVA), 135–158 (LYIG…LHLQ), 175–199 (LNHH…HVAI), 273–291 (MAHH…GHMY), 330–353 (LHFQ…QHMY), 369–395 (AALY…IFFI), 417–439 (AIIS…LYVH), and 517–535 (FLVH…LILV). Positions 559 and 568 each coordinate [4Fe-4S] cluster. 2 consecutive transmembrane segments (helical) span residues 575 to 596 (AFYL…YWHW) and 643 to 665 (LSVW…MFLI). Residues H654, M662, and Y670 each coordinate chlorophyll a. Phylloquinone is bound at residue W671. The helical transmembrane segment at 707 to 727 (LVGLAHFSVGYIFTYAAFLIA) threads the bilayer.

This sequence belongs to the PsaA/PsaB family. In terms of assembly, the PsaA/B heterodimer binds the P700 chlorophyll special pair and subsequent electron acceptors. PSI consists of a core antenna complex that captures photons, and an electron transfer chain that converts photonic excitation into a charge separation. The eukaryotic PSI reaction center is composed of at least 11 subunits. It depends on P700 is a chlorophyll a/chlorophyll a' dimer, A0 is one or more chlorophyll a, A1 is one or both phylloquinones and FX is a shared 4Fe-4S iron-sulfur center. as a cofactor.

It localises to the plastid. The protein resides in the chloroplast thylakoid membrane. It carries out the reaction reduced [plastocyanin] + hnu + oxidized [2Fe-2S]-[ferredoxin] = oxidized [plastocyanin] + reduced [2Fe-2S]-[ferredoxin]. Functionally, psaA and PsaB bind P700, the primary electron donor of photosystem I (PSI), as well as the electron acceptors A0, A1 and FX. PSI is a plastocyanin-ferredoxin oxidoreductase, converting photonic excitation into a charge separation, which transfers an electron from the donor P700 chlorophyll pair to the spectroscopically characterized acceptors A0, A1, FX, FA and FB in turn. Oxidized P700 is reduced on the lumenal side of the thylakoid membrane by plastocyanin. The chain is Photosystem I P700 chlorophyll a apoprotein A2 from Populus alba (White poplar).